The primary structure comprises 408 residues: Peptidase T-like protein RB0614 (408 aa).

H80 provides a ligand contact to Zn(2+). Residue D82 is part of the active site. D142 contacts Zn(2+). E174 serves as the catalytic Proton acceptor. Residues E175, D198, and H380 each contribute to the Zn(2+) site.

It belongs to the peptidase M20B family. Zn(2+) is required as a cofactor.

This chain is Peptidase T-like protein RB0614, found in Rhizobium meliloti (strain 1021) (Ensifer meliloti).